The primary structure comprises 755 residues: Sentrin-specific protease 5 (755 aa).

Positions 268–321 are disordered; sequence VQKVTGDHQETRRENGEGGSCSPFPSPEPKDPSCRHQPYFPDMDSSAVVKGTNS. The span at 272-283 shows a compositional bias: basic and acidic residues; that stretch reads TGDHQETRRENG. A protease region spans residues 567–724; the sequence is HMLDMDDLAT…VFVLQYCKCL (158 aa). Active-site residues include His-646, Asp-663, and Cys-713.

It belongs to the peptidase C48 family. As to quaternary structure, interacts with CCAR2.

Its subcellular location is the nucleus. It localises to the nucleolus. Protease that catalyzes two essential functions in the SUMO pathway: processing of full-length SUMO3 to its mature form and deconjugation of SUMO2 and SUMO3 from targeted proteins. Has weak proteolytic activity against full-length SUMO1 or SUMO1 conjugates. Required for cell division. This is Sentrin-specific protease 5 (SENP5) from Homo sapiens (Human).